Reading from the N-terminus, the 975-residue chain is Protein cramped (975 aa).

Disordered stretches follow at residues 1 to 37 (MEEL…GGGA), 71 to 111 (QKMK…GSGK), 318 to 346 (AIFP…PSVA), 403 to 450 (PVAA…LMKM), and 809 to 844 (PIDR…QEPG). Residues 7 to 20 (QPPPPPPLPPPPSS) are compositionally biased toward pro residues. The segment covering 86–98 (SEREPNKKEEKAA) has biased composition (basic and acidic residues). Positions 100–111 (KTPSQLKTGSGK) are enriched in polar residues. The region spanning 109–173 (SGKTTWTNVE…HYYQTYHKIC (65 aa)) is the SANT domain. Basic and acidic residues predominate over residues 410 to 425 (LRTESGSEKRSPETKK). Low complexity predominate over residues 815 to 833 (GTSSGGISSSGSKPDSSMG).

This sequence belongs to the cramped family.

Its subcellular location is the nucleus. Its function is as follows. Polycomb group (Pc-G) genes are needed to maintain expression patterns of the homeotic selector genes of the Antennapedia (Antp-C) and Bithorax (Bx-C) complexes, and hence for the maintenance of segmental determination. Can act as a modifier of position effect variegation (PEV). In Drosophila sechellia (Fruit fly), this protein is Protein cramped (crm).